The sequence spans 148 residues: Endoribonuclease YbeY (148 aa).

The Zn(2+) site is built by His105, His109, and Asp115.

It belongs to the endoribonuclease YbeY family. It depends on Zn(2+) as a cofactor.

It localises to the cytoplasm. In terms of biological role, single strand-specific metallo-endoribonuclease involved in late-stage 70S ribosome quality control and in maturation of the 3' terminus of the 16S rRNA. This is Endoribonuclease YbeY from Chlorobium phaeovibrioides (strain DSM 265 / 1930) (Prosthecochloris vibrioformis (strain DSM 265)).